Reading from the N-terminus, the 530-residue chain is Phosphoenolpyruvate carboxykinase (ATP) (530 aa).

The substrate site is built by arginine 58, tyrosine 195, and lysine 201. Residues lysine 201, histidine 220, and 236–244 (GLSGTGKTT) each bind ATP. 2 residues coordinate Mn(2+): lysine 201 and histidine 220. Aspartate 257 lines the Mn(2+) pocket. ATP-binding positions include glutamate 285, arginine 321, 440–441 (RI), and threonine 446. Arginine 321 lines the substrate pocket.

It belongs to the phosphoenolpyruvate carboxykinase (ATP) family. Requires Mn(2+) as cofactor.

Its subcellular location is the cytoplasm. It carries out the reaction oxaloacetate + ATP = phosphoenolpyruvate + ADP + CO2. It functions in the pathway carbohydrate biosynthesis; gluconeogenesis. Its function is as follows. Involved in the gluconeogenesis. Catalyzes the conversion of oxaloacetate (OAA) to phosphoenolpyruvate (PEP) through direct phosphoryl transfer between the nucleoside triphosphate and OAA. This chain is Phosphoenolpyruvate carboxykinase (ATP), found in Staphylococcus aureus (strain Mu3 / ATCC 700698).